Consider the following 662-residue polypeptide: Neurexin-2-beta (662 aa).

Over residues 1–10 (MPPGGSGQGG) the composition is skewed to gly residues. The tract at residues 1–27 (MPPGGSGQGGCPRRPPALAGPLPPPPP) is disordered. The first 46 residues, 1–46 (MPPGGSGQGGCPRRPPALAGPLPPPPPPPPLPLLLGLLLLLGAAEG), serve as a signal peptide directing secretion. Over 47–586 (ARVSSSLSTT…EVIRESSSTT (540 aa)) the chain is Extracellular. The Laminin G-like domain occupies 87 to 295 (TTYIFGKGGA…HLRLVGEGPS (209 aa)). Residues D139 and V156 each coordinate Ca(2+). N-linked (GlcNAc...) asparagine glycosylation occurs at N186. Residues I238 and N240 each coordinate Ca(2+). An O-linked (Xyl...) (heparan sulfate) serine glycan is attached at S350. Disordered stretches follow at residues 408–458 (ATQD…LPPT), 476–496 (LLSP…ATGA), and 530–557 (LGPG…PGFP). A helical membrane pass occupies residues 587–607 (GMVVGIVAAAALCILILLYAM). The Cytoplasmic portion of the chain corresponds to 608–662 (YKYRNRDEGSYQVDQSRNYISNSAQSNGAVVKEKAPAAPKTPSKAKKNKDKEYYV). The interval 629-662 (NSAQSNGAVVKEKAPAAPKTPSKAKKNKDKEYYV) is disordered.

Belongs to the neurexin family. As to quaternary structure, interacts (via cytoplasmic C-terminal region) with CASK. Isoform Beta 4b binds alpha-dystroglycan and neuroligins NLGN1, NLGN2 and NLGN3. Interacts with CBLN1, CBLN2 and, less avidly, with CBLN4. Interacts with CLSTN3. Post-translationally, O-glycosylated; contains heparan sulfate. Heparan sulfate attachment is required for synapse development by mediating interactions with neuroligins. As to expression, brain (neuronal synapse).

It localises to the presynaptic cell membrane. In terms of biological role, neuronal cell surface protein that may be involved in cell recognition and cell adhesion. In Rattus norvegicus (Rat), this protein is Neurexin-2-beta (Nrxn2).